The chain runs to 518 residues: Vesicular inhibitory amino acid transporter (518 aa).

Residues 1-125 (MATLIRSKLS…WNVTNAIQGM (125 aa)) are Cytoplasmic-facing. The disordered stretch occupies residues 66–98 (EVPSGDPTAEGDSHYQRDGTGPPSSASKDEGLC). A helical transmembrane segment spans residues 126–146 (FVLGLPYAILHGGYLGLFLII). Topologically, residues 147–197 (FAAVVCCYTGKILIACLYEENEDGETVRVRDSYVDIANACCAPRFPKLGGR) are lumenal, vesicle. A helical membrane pass occupies residues 198–218 (VVNVAQIIELVMTCILYVVVS). The Cytoplasmic segment spans residues 219 to 258 (GNLMYNSFPSLPISQKSWSIIATAMLLPCAFLKNLKAVSK). Residues 259–279 (FSLLCTLAHFVINVLVIAYCL) form a helical membrane-spanning segment. Residues 280 to 298 (SRARDWAWDKVKFYIDVKK) are Lumenal, vesicle-facing. A helical membrane pass occupies residues 299–319 (FPISIGIIVFSYTSQIFLPSL). At 320–334 (EGNMQSPKEFHCMMN) the chain is on the cytoplasmic side. A helical membrane pass occupies residues 335–355 (WTHIAACILKGLFALVAYLTW). The Lumenal, vesicle segment spans residues 356 to 376 (ADETKEVITDNLPSTIRAVVN). A helical membrane pass occupies residues 377-397 (LFLVAKALLSYPLPFFAAVEV). Residues 398-431 (LEKSLFQEGARAFFPNCYGGDGRLKSWGLTLRCA) lie on the Cytoplasmic side of the membrane. The chain crosses the membrane as a helical span at residues 432–452 (LVVFTLLMAIYVPHFALLMGL). At 453 to 454 (TG) the chain is on the lumenal, vesicle side. A helical transmembrane segment spans residues 455–475 (SLTGAGLCFLLPSLFHLKLLW). Residues 476-482 (RKLQWHQ) lie on the Cytoplasmic side of the membrane. Residues 483 to 503 (VFFDVSIFVIGSICSVSGFVH) form a helical membrane-spanning segment. Topologically, residues 504–518 (SLEGLIEAFRFNIED) are lumenal, vesicle.

It belongs to the amino acid/polyamine transporter 2 family.

The protein resides in the cytoplasmic vesicle membrane. The protein localises to the presynapse. It carries out the reaction 4-aminobutanoate(out) + n H(+)(in) = 4-aminobutanoate(in) + n H(+)(out). The enzyme catalyses glycine(out) + n H(+)(in) = glycine(in) + n H(+)(out). The catalysed reaction is beta-alanine(out) + n H(+)(in) = beta-alanine(in) + n H(+)(out). Its function is as follows. Antiporter that exchanges vesicular protons for cytosolic 4-aminobutanoate or to a lesser extend glycine, thus allowing their secretion from nerve terminals. The transport is equally dependent on the chemical and electrical components of the proton gradient. May also transport beta-alanine. Acidification of GABAergic synaptic vesicles is a prerequisite for 4-aminobutanoate uptake. The chain is Vesicular inhibitory amino acid transporter from Xenopus tropicalis (Western clawed frog).